Here is a 413-residue protein sequence, read N- to C-terminus: Putative syntaxin-5 (413 aa).

Residues M1–R391 are Cytoplasmic-facing. Residues K257 to D290 form a disordered region. One can recognise a t-SNARE coiled-coil homology domain in the interval L321–Y383. Residues W392–L412 form a helical; Anchor for type IV membrane protein membrane-spanning segment. A topological domain (extracellular) is located at residue T413.

Belongs to the syntaxin family.

It localises to the membrane. Potentially involved in docking of synaptic vesicles at presynaptic active zones. This is Putative syntaxin-5 (syx-5) from Caenorhabditis elegans.